A 620-amino-acid polypeptide reads, in one-letter code: Chaperone protein HscA homolog (620 aa).

The protein belongs to the heat shock protein 70 family.

Chaperone involved in the maturation of iron-sulfur cluster-containing proteins. Has a low intrinsic ATPase activity which is markedly stimulated by HscB. In Shewanella oneidensis (strain ATCC 700550 / JCM 31522 / CIP 106686 / LMG 19005 / NCIMB 14063 / MR-1), this protein is Chaperone protein HscA homolog.